The following is a 114-amino-acid chain: Large ribosomal subunit protein bL19 (114 aa).

The protein belongs to the bacterial ribosomal protein bL19 family.

Its function is as follows. This protein is located at the 30S-50S ribosomal subunit interface and may play a role in the structure and function of the aminoacyl-tRNA binding site. In Bacillus cytotoxicus (strain DSM 22905 / CIP 110041 / 391-98 / NVH 391-98), this protein is Large ribosomal subunit protein bL19.